Here is a 411-residue protein sequence, read N- to C-terminus: Allantoate amidohydrolase (411 aa).

His-81, Asp-92, Glu-127, and His-190 together coordinate Zn(2+). Positions 215, 275, and 288 each coordinate allantoate. His-382 contributes to the Zn(2+) binding site.

Belongs to the peptidase M20 family. In terms of assembly, homodimer. Zn(2+) is required as a cofactor.

The protein resides in the cytoplasm. It carries out the reaction allantoate + H2O + 2 H(+) = (S)-2-ureidoglycine + NH4(+) + CO2. It functions in the pathway nitrogen metabolism; (S)-allantoin degradation. With respect to regulation, sulfate could be an allosteric effector of the enzyme that is responsible for stabilizing substrate binding. In addition, this anion effector may act as a counterion during enzyme-mediated catalysis. Its function is as follows. Involved in the anaerobic nitrogen utilization via the assimilation of allantoin. Catalyzes specifically the hydrolysis of allantoate to yield CO2, NH3 and S-ureidoglycine, which is unstable and readily undergoes a second deamination by S-ureidoglycine aminohydrolase AllE to yield S-ureidoglycolate and NH3. In vivo, the spontaneous release of S-ureidoglycolate and ammonia from S-ureidoglycine appears to be too slow to sustain an efficient flux of nitrogen. The sequence is that of Allantoate amidohydrolase from Escherichia coli (strain K12).